A 136-amino-acid polypeptide reads, in one-letter code: Large ribosomal subunit protein uL16 (136 aa).

Belongs to the universal ribosomal protein uL16 family. In terms of assembly, part of the 50S ribosomal subunit.

Binds 23S rRNA and is also seen to make contacts with the A and possibly P site tRNAs. The polypeptide is Large ribosomal subunit protein uL16 (Pasteurella multocida (strain Pm70)).